A 129-amino-acid chain; its full sequence is Small ribosomal subunit protein uS11 (129 aa).

The protein belongs to the universal ribosomal protein uS11 family. As to quaternary structure, part of the 30S ribosomal subunit. Interacts with proteins S7 and S18. Binds to IF-3.

Its function is as follows. Located on the platform of the 30S subunit, it bridges several disparate RNA helices of the 16S rRNA. Forms part of the Shine-Dalgarno cleft in the 70S ribosome. The sequence is that of Small ribosomal subunit protein uS11 from Methylobacillus flagellatus (strain ATCC 51484 / DSM 6875 / VKM B-1610 / KT).